The following is an 86-amino-acid chain: U22-theraphotoxin-Cg1a (86 aa).

A signal peptide spans 1–20 (MKVSVVLAITVLALLSVAYA). A propeptide spanning residues 21–51 (SEFEEKELVKEVVRTIFLGKEDAALREETDR) is cleaved from the precursor. Disulfide bonds link cysteine 53–cysteine 67, cysteine 60–cysteine 72, and cysteine 66–cysteine 79. Position 85 is a phenylalanine amide (phenylalanine 85).

Belongs to the neurotoxin 10 (Hwtx-1) family. 42 (Jztx-44) subfamily. As to expression, expressed by the venom gland.

It localises to the secreted. In terms of biological role, probable ion channel inhibitor. The sequence is that of U22-theraphotoxin-Cg1a from Chilobrachys guangxiensis (Chinese earth tiger tarantula).